The following is a 172-amino-acid chain: Adenine phosphoribosyltransferase (172 aa).

The protein belongs to the purine/pyrimidine phosphoribosyltransferase family. In terms of assembly, homodimer.

It is found in the cytoplasm. It carries out the reaction AMP + diphosphate = 5-phospho-alpha-D-ribose 1-diphosphate + adenine. It participates in purine metabolism; AMP biosynthesis via salvage pathway; AMP from adenine: step 1/1. Its function is as follows. Catalyzes a salvage reaction resulting in the formation of AMP, that is energically less costly than de novo synthesis. The protein is Adenine phosphoribosyltransferase of Roseiflexus castenholzii (strain DSM 13941 / HLO8).